The following is a 317-amino-acid chain: Tyrosine--tRNA ligase (317 aa).

Tyr-33 contacts L-tyrosine. The 'HIGH' region motif lies at 38-46; the sequence is PSGKIHMGH. Residues Tyr-155, Gln-159, Asp-162, and Gln-177 each contribute to the L-tyrosine site. The 'KMSKS' region motif lies at 211–215; it reads KMSSS. Position 214 (Ser-214) interacts with ATP.

Belongs to the class-I aminoacyl-tRNA synthetase family. TyrS type 3 subfamily. Homodimer.

The protein localises to the cytoplasm. It carries out the reaction tRNA(Tyr) + L-tyrosine + ATP = L-tyrosyl-tRNA(Tyr) + AMP + diphosphate + H(+). Its function is as follows. Catalyzes the attachment of tyrosine to tRNA(Tyr) in a two-step reaction: tyrosine is first activated by ATP to form Tyr-AMP and then transferred to the acceptor end of tRNA(Tyr). This Methanococcoides burtonii (strain DSM 6242 / NBRC 107633 / OCM 468 / ACE-M) protein is Tyrosine--tRNA ligase.